A 346-amino-acid polypeptide reads, in one-letter code: Probable 3-hydroxyacyl-CoA dehydrogenase (346 aa).

Positions 322–346 (RANLSPSATPCTPWKARKATSCAPP) are disordered.

It belongs to the 3-hydroxyacyl-CoA dehydrogenase family.

It carries out the reaction a (3S)-3-hydroxyacyl-CoA + NAD(+) = a 3-oxoacyl-CoA + NADH + H(+). This is Probable 3-hydroxyacyl-CoA dehydrogenase from Deinococcus radiodurans (strain ATCC 13939 / DSM 20539 / JCM 16871 / CCUG 27074 / LMG 4051 / NBRC 15346 / NCIMB 9279 / VKM B-1422 / R1).